A 282-amino-acid chain; its full sequence is D-alanine aminotransferase (282 aa).

A substrate-binding site is contributed by tyrosine 32. Arginine 51 provides a ligand contact to pyridoxal 5'-phosphate. Substrate contacts are provided by arginine 99 and histidine 101. Lysine 146 functions as the Proton acceptor in the catalytic mechanism. Lysine 146 is subject to N6-(pyridoxal phosphate)lysine. Glutamate 178 contacts pyridoxal 5'-phosphate.

Belongs to the class-IV pyridoxal-phosphate-dependent aminotransferase family. In terms of assembly, homodimer. It depends on pyridoxal 5'-phosphate as a cofactor.

The enzyme catalyses D-alanine + 2-oxoglutarate = D-glutamate + pyruvate. Functionally, acts on the D-isomers of alanine, leucine, aspartate, glutamate, aminobutyrate, norvaline and asparagine. The enzyme transfers an amino group from a substrate D-amino acid to the pyridoxal phosphate cofactor to form pyridoxamine and an alpha-keto acid in the first half-reaction. The second half-reaction is the reverse of the first, transferring the amino group from the pyridoxamine to a second alpha-keto acid to form the product D-amino acid via a ping-pong mechanism. This is an important process in the formation of D-alanine and D-glutamate, which are essential bacterial cell wall components. In Staphylococcus haemolyticus, this protein is D-alanine aminotransferase (dat).